We begin with the raw amino-acid sequence, 1037 residues long: Multidrug resistance protein MdtF (1037 aa).

The Cytoplasmic segment spans residues 1–9 (MANYFIDRP). The chain crosses the membrane as a helical span at residues 10–30 (VFAWVLAIIMMLAGGLAIMNL). Residues 31 to 338 (PVAQYPQIAP…TTPFIEISIQ (308 aa)) are Periplasmic-facing. Residues 339–359 (EVFKTLVEAIILVFLVMYLFL) form a helical membrane-spanning segment. Topologically, residues 360–369 (QNFRATIIPT) are cytoplasmic. Residues 370 to 390 (IAVPVVILGTFAILSAVGFTI) traverse the membrane as a helical segment. The Periplasmic segment spans residues 391–392 (NT). A helical transmembrane segment spans residues 393–413 (LTMFGMVLAIGLLVDDAIVVV). The Cytoplasmic portion of the chain corresponds to 414 to 441 (ENVERVIAEDKLPPKEATHKSMGQIQRA). Residues 442–462 (LVGIAVVLSAVFMPMAFMSGA) traverse the membrane as a helical segment. At 463-471 (TGEIYRQFS) the chain is on the periplasmic side. The chain crosses the membrane as a helical span at residues 472-492 (ITLISSMLLSVFVAMSLTPAL). The Cytoplasmic segment spans residues 493–534 (CATILKAAPEGGHKPNALFARFNTLFEKSTQHYTDSTRSLLR). A helical membrane pass occupies residues 535-555 (CTGRYMVIYLLICAGMAVLFL). The Periplasmic portion of the chain corresponds to 556–870 (RTPTSFLPEE…SYQEALSSNQ (315 aa)). A helical membrane pass occupies residues 871–891 (APALYAISLVVVFLALAALYE). Position 892 (S892) is a topological domain, cytoplasmic. The helical transmembrane segment at 893-913 (WSIPFSVMLVVPLGVVGALLA) threads the bilayer. At 914–927 (TDLRGLSNDVYFQV) the chain is on the periplasmic side. Residues 928–948 (GLLTTIGLSAKNAILIVEFAV) form a helical membrane-spanning segment. At 949-972 (EMMQKEGKTPIEAIIEAARMRLRP) the chain is on the cytoplasmic side. A helical membrane pass occupies residues 973 to 993 (ILMTSLAFILGVLPLVISHGA). Residues 994–1006 (GSGAQNAVGTGVM) lie on the Periplasmic side of the membrane. A helical membrane pass occupies residues 1007-1027 (GGMFAATVLAIYFVPVFFVVV). Residues 1028–1037 (EHLFARFKKA) lie on the Cytoplasmic side of the membrane.

The protein belongs to the resistance-nodulation-cell division (RND) (TC 2.A.6) family. In terms of assembly, homotrimer. Part of the tripartite efflux system MdtEF-TolC, which is composed of an inner membrane transporter, MdtF, a membrane fusion protein, MdtE, and an outer membrane component, TolC. The complex forms a large protein conduit and can translocate molecules across both the inner and outer membranes.

It localises to the cell inner membrane. Part of the tripartite efflux system MdtEF-TolC, which confers resistance to various compounds. This is Multidrug resistance protein MdtF (mdtF) from Escherichia coli O157:H7.